We begin with the raw amino-acid sequence, 66 residues long: Small archaeal modifier protein 2 (66 aa).

Lys58 participates in a covalent cross-link: Glycyl lysine isopeptide (Lys-Gly) (interchain with G-Cter in SAMP2). 1-thioglycine; alternate is present on Gly66. Gly66 bears the Glycyl adenylate; alternate mark. Gly66 participates in a covalent cross-link: Glycyl lysine isopeptide (Gly-Lys) (interchain with K-? in acceptor proteins); alternate.

Monomer. Monomeric and polymeric forms interact with NcsA. The C-terminal glycine is likely acyl-adenylated (-COAMP) by UbaA, and also probably thiocarboxylated (-COSH) to function in sulfur transfer.

Its function is as follows. Functions as a protein modifier covalently attached to lysine residues of substrate proteins, as well as a sulfur carrier in tRNA thiolation. The protein modification process is termed sampylation and involves the formation of an isopeptide bond between the SAMP2 C-terminal glycine carboxylate and the epsilon-amino group of lysine residues on target proteins. Is able to form polymeric chains with itself at Lys-58, similar to ubiquitin and other ubiquitin-like proteins. May serve as a proteolytic signal in the cell to target proteins for degradation by proteasomes. This chain is Small archaeal modifier protein 2 (samp2), found in Haloferax volcanii (strain ATCC 29605 / DSM 3757 / JCM 8879 / NBRC 14742 / NCIMB 2012 / VKM B-1768 / DS2) (Halobacterium volcanii).